Reading from the N-terminus, the 559-residue chain is Nuclear speckle splicing regulatory protein 1 (559 aa).

Residues 22 to 57 (VLQKPSVFGNDSDDDDDETSVSESLQREAAKKQAMK) are disordered. 2 positions are modified to phosphoserine: Ser27 and Ser33. The segment covering 32-41 (DSDDDDDETS) has biased composition (acidic residues). Residues 105–179 (IHNLLKAVEI…EARLDVTKQR (75 aa)) adopt a coiled-coil conformation. The interval 107 to 171 (NLLKAVEIRK…RERRAAALEA (65 aa)) is necessary for alternative splicing activity. Residues 195 to 534 (EEEVPTCSFR…AKRSNEETVT (340 aa)) form a disordered region. Residues 204 to 219 (REARSEIKEEKSKGYS) are compositionally biased toward basic and acidic residues. A Glycyl lysine isopeptide (Lys-Gly) (interchain with G-Cter in SUMO2) cross-link involves residue Lys211. 3 positions are modified to phosphoserine: Ser249, Ser255, and Ser256. The segment covering 251–274 (FDAKSSENDEMEGDKGNCRREKGT) has biased composition (basic and acidic residues). Thr276 carries the phosphothreonine modification. A Glycyl lysine isopeptide (Lys-Gly) (interchain with G-Cter in SUMO2) cross-link involves residue Lys282. Basic and acidic residues-rich tracts occupy residues 314-343 (EKRE…EKRD), 351-488 (SHRD…RNPE), and 502-521 (RITE…HETV). The stretch at 379-428 (KREKDREKYPSREQERHRQRNNYDRHNEKGCEKEEKSKEKEEHVKARKER) forms a coiled coil. Phosphoserine is present on Ser458.

It belongs to the NSRP1 family. Interacts (via C-terminus) with SRSF1. Interacts (via C-terminus) with SRSF2.

Its subcellular location is the nucleus. The protein resides in the nucleus speckle. In terms of biological role, RNA-binding protein that mediates pre-mRNA alternative splicing regulation. In Bos taurus (Bovine), this protein is Nuclear speckle splicing regulatory protein 1 (NSRP1).